The following is a 263-amino-acid chain: Troponin T, slow skeletal muscle (263 aa).

Acidic residues predominate over residues 1 to 38 (MSDAEEQEYEEEQPEEEEAAEEEEEAPEEPEPAAEPEE). 2 disordered regions span residues 1 to 64 (MSDA…RVDF) and 109 to 154 (AERA…KKKV). Serine 2 carries the post-translational modification Phosphoserine; by CK2. A compositionally biased stretch (pro residues) spans 44 to 56 (SRPVVPPLIPPKI). A compositionally biased stretch (basic and acidic residues) spans 109-150 (AERAEQQRFRTEKERERQAKLAEEKMRKEEEEAKKRAEDDAK).

It belongs to the troponin T family. In terms of assembly, interacts with TPM3. As to expression, expressed dominantly in slow muscles, like masseter, diaphragm, psoas major and spinnalis. Isoform 2 is also expressed in fast muscles.

Troponin T is the tropomyosin-binding subunit of troponin, the thin filament regulatory complex which confers calcium-sensitivity to striated muscle actomyosin ATPase activity. This is Troponin T, slow skeletal muscle (TNNT1) from Bos taurus (Bovine).